Reading from the N-terminus, the 310-residue chain is tRNA dimethylallyltransferase (310 aa).

24 to 31 (GPTASGKT) serves as a coordination point for ATP. Substrate is bound at residue 26 to 31 (TASGKT). The interval 49 to 52 (DSRQ) is interaction with substrate tRNA.

The protein belongs to the IPP transferase family. As to quaternary structure, monomer. Requires Mg(2+) as cofactor.

It catalyses the reaction adenosine(37) in tRNA + dimethylallyl diphosphate = N(6)-dimethylallyladenosine(37) in tRNA + diphosphate. Catalyzes the transfer of a dimethylallyl group onto the adenine at position 37 in tRNAs that read codons beginning with uridine, leading to the formation of N6-(dimethylallyl)adenosine (i(6)A). The protein is tRNA dimethylallyltransferase of Synechococcus sp. (strain WH7803).